The sequence spans 226 residues: Large ribosomal subunit protein uL1 (226 aa).

This sequence belongs to the universal ribosomal protein uL1 family. Part of the 50S ribosomal subunit.

Its function is as follows. Binds directly to 23S rRNA. The L1 stalk is quite mobile in the ribosome, and is involved in E site tRNA release. In terms of biological role, protein L1 is also a translational repressor protein, it controls the translation of the L11 operon by binding to its mRNA. The protein is Large ribosomal subunit protein uL1 of Borreliella burgdorferi (strain ZS7) (Borrelia burgdorferi).